Reading from the N-terminus, the 301-residue chain is Phosducin-like protein (301 aa).

Thr2 bears the N-acetylthreonine mark. Residues 15–60 (YYYSTSEDEDSDHEDKDRGRGAPASSSTPAEAELAGEGISVNTGPK) form a disordered region. Ser20 and Ser25 each carry phosphoserine. Over residues 36–49 (APASSSTPAEAELA) the composition is skewed to low complexity. One can recognise a Phosducin domain in the interval 36–299 (APASSSTPAE…TCHSEDSDLE (264 aa)). A thioredoxin fold region spans residues 158-301 (FKQVLEIPSG…HSEDSDLEID (144 aa)). 3 positions are modified to phosphoserine: Ser226, Ser293, and Ser296.

This sequence belongs to the phosducin family. As to quaternary structure, interacts with the CCT chaperonin complex. Forms a complex with the beta and gamma subunits of the GTP-binding protein, transducin.

It is found in the cell projection. The protein localises to the cilium. Functionally, functions as a co-chaperone for CCT in the assembly of heterotrimeric G protein complexes, facilitates the assembly of both Gbeta-Ggamma and RGS-Gbeta5 heterodimers. Also acts as a positive regulator of hedgehog signaling and regulates ciliary function. In Rattus norvegicus (Rat), this protein is Phosducin-like protein (Pdcl).